A 416-amino-acid chain; its full sequence is NADH-quinone oxidoreductase subunit D (416 aa).

Belongs to the complex I 49 kDa subunit family. NDH-1 is composed of 14 different subunits. Subunits NuoB, C, D, E, F, and G constitute the peripheral sector of the complex.

The protein localises to the cell inner membrane. The enzyme catalyses a quinone + NADH + 5 H(+)(in) = a quinol + NAD(+) + 4 H(+)(out). In terms of biological role, NDH-1 shuttles electrons from NADH, via FMN and iron-sulfur (Fe-S) centers, to quinones in the respiratory chain. The immediate electron acceptor for the enzyme in this species is believed to be ubiquinone. Couples the redox reaction to proton translocation (for every two electrons transferred, four hydrogen ions are translocated across the cytoplasmic membrane), and thus conserves the redox energy in a proton gradient. The sequence is that of NADH-quinone oxidoreductase subunit D from Gluconacetobacter diazotrophicus (strain ATCC 49037 / DSM 5601 / CCUG 37298 / CIP 103539 / LMG 7603 / PAl5).